A 136-amino-acid polypeptide reads, in one-letter code: Translation initiation factor 5A (136 aa).

Hypusine is present on K36.

It belongs to the eIF-5A family.

It is found in the cytoplasm. Functionally, functions by promoting the formation of the first peptide bond. The chain is Translation initiation factor 5A (eIF5A) from Hyperthermus butylicus (strain DSM 5456 / JCM 9403 / PLM1-5).